The following is a 521-amino-acid chain: Envelope glycoprotein (521 aa).

The first 20 residues, 1 to 20, serve as a signal peptide directing secretion; sequence MVDSTIRLVATIFLISLTQQ. N-linked (GlcNAc...) asparagine; by host glycans are attached at residues Asn44, Asn158, Asn189, and Asn396. Residues 501-517 traverse the membrane as a helical segment; it reads ISWVVVIGVVLVGVCLM.

Homooligomer; disulfide-linked (possibly homodimer).

The protein resides in the virion membrane. In terms of biological role, attaches the virus to host cellular receptor and later induces fusion of virion with host membrane. The chain is Envelope glycoprotein (P4) from Dhori virus (strain Indian/1313/61) (Dho).